A 95-amino-acid polypeptide reads, in one-letter code: Small ribosomal subunit protein bS6 (95 aa).

This sequence belongs to the bacterial ribosomal protein bS6 family.

Binds together with bS18 to 16S ribosomal RNA. This is Small ribosomal subunit protein bS6 from Aster yellows witches'-broom phytoplasma (strain AYWB).